A 380-amino-acid chain; its full sequence is Septin homolog spn4 (380 aa).

The 274-residue stretch at 25 to 298 (NGVAFTLMLC…EQYRQEQMKV (274 aa)) folds into the Septin-type G domain. Residues 35–42 (GESGLGKT) form a G1 motif region. Residues 35 to 42 (GESGLGKT), threonine 70, glycine 96, 175 to 183 (KADMYTRRD), glycine 231, and arginine 247 contribute to the GTP site. Residues 93–96 (DTPG) form a G3 motif region. Residues 174–177 (AKAD) are G4 motif.

The protein belongs to the TRAFAC class TrmE-Era-EngA-EngB-Septin-like GTPase superfamily. Septin GTPase family. As to quaternary structure, component of the septin complex composed of two copies of each spn1, spn2, spn3 and spn4.

Its subcellular location is the cytoplasm. The protein localises to the cell cortex. Plays a role in the cell cycle. Involved in a late stage of septum formation leading to the separation of the daughter cells. The chain is Septin homolog spn4 (spn4) from Schizosaccharomyces pombe (strain 972 / ATCC 24843) (Fission yeast).